The primary structure comprises 309 residues: UDP-N-acetylenolpyruvoylglucosamine reductase (309 aa).

Residues 34–198 (RVGGPAEVMF…VRARLHARPG (165 aa)) enclose the FAD-binding PCMH-type domain. Arg178 is an active-site residue. Residue Ser227 is the Proton donor of the active site. Residue Glu297 is part of the active site.

This sequence belongs to the MurB family. FAD is required as a cofactor.

It localises to the cytoplasm. It carries out the reaction UDP-N-acetyl-alpha-D-muramate + NADP(+) = UDP-N-acetyl-3-O-(1-carboxyvinyl)-alpha-D-glucosamine + NADPH + H(+). It participates in cell wall biogenesis; peptidoglycan biosynthesis. Cell wall formation. The protein is UDP-N-acetylenolpyruvoylglucosamine reductase of Acidiphilium cryptum (strain JF-5).